Here is a 948-residue protein sequence, read N- to C-terminus: Zinc finger CCCH domain-containing protein 3 (948 aa).

Disordered regions lie at residues 25 to 108, 121 to 219, 265 to 296, and 336 to 493; these read HGNA…VPQQ, QNVV…RRTV, VDAG…REAS, and NVCK…LKKT. A compositionally biased stretch (basic residues) spans 56–74; that stretch reads RPSRRGYSSHHGPSWRKKY. Over residues 128 to 141 the composition is skewed to low complexity; that stretch reads KPPSKSGSASASGA. Residues 157–166 are compositionally biased toward basic and acidic residues; sequence QRPREGEGEP. A compositionally biased stretch (low complexity) spans 372-398; the sequence is SAPSKYKWKASSPSASSSSSFRWQSEA. Over residues 405-415 the composition is skewed to polar residues; the sequence is SQLSPVLSRSP. S408 bears the Phosphoserine mark. Basic residues predominate over residues 441–452; sequence VKSRTKIIRRRS. 5 consecutive C3H1-type zinc fingers follow at residues 667–695, 699–722, 723–749, 750–777, and 778–800; these read EKRK…HDPE, VCTR…HHVS, KEKM…HVYV, SRKA…HTLL, and CPDF…HRTQ. Disordered stretches follow at residues 798 to 891 and 913 to 948; these read RTQK…HEAP and ISLQ…KPRL. The span at 834–846 shows a compositional bias: polar residues; that stretch reads SASQRPTRQTPSS. Composition is skewed to low complexity over residues 847–856 and 864–885; these read AALTAAAVAA and SASP…PPAS. Phosphoserine occurs at positions 918 and 920.

In terms of assembly, interacts with SMAD1, SMAD3, SMAD4, CPSF2 and CPSF3.

It is found in the nucleus. Functionally, required for the export of polyadenylated mRNAs from the nucleus. Enhances ACVR1B-induced SMAD-dependent transcription. Binds to single-stranded DNA but not to double-stranded DNA in vitro. Involved in RNA cleavage. This Homo sapiens (Human) protein is Zinc finger CCCH domain-containing protein 3 (ZC3H3).